Reading from the N-terminus, the 425-residue chain is 5-nitroanthranilic acid aminohydrolase (425 aa).

The active site involves aspartate 88. Glutamate 158 acts as the Proton acceptor in catalysis.

The protein belongs to the peptidase M20A family. Requires Co(2+) as cofactor. It depends on Mn(2+) as a cofactor. Zn(2+) is required as a cofactor. The cofactor is Fe(2+). Ni(2+) serves as cofactor.

It catalyses the reaction 5-nitroanthranilate + H2O + H(+) = 5-nitrosalicylate + NH4(+). In terms of biological role, catalyzes the deamination of 5-nitroanthranilate (5NAA) to 5-nitrosalicylate (5NSA), the first step in biodegradation of 5-nitroanthranilate. In Bradyrhizobium sp, this protein is 5-nitroanthranilic acid aminohydrolase (naaA).